The following is a 139-amino-acid chain: MYNPWQVGASLAPARAGPRPFPTPRARPPDCSGGHAPSGFPALGLRTAQRPRPFSSSPRSASGRLRGPRPVARGPAHSSSPTGLPAYLPPAAALDSQTSAPTVSPVTRPRVVARGKTPRVSLAGLETLSSLLHQQQLFD.

Positions 1-116 (MYNPWQVGAS…TRPRVVARGK (116 aa)) are disordered. Low complexity-rich tracts occupy residues 50–70 (RPRP…GPRP) and 84–110 (LPAY…TRPR).

This is an uncharacterized protein from Homo sapiens (Human).